Consider the following 361-residue polypeptide: tRNA pseudouridine synthase D (361 aa).

Asp76 serves as the catalytic Nucleophile. The TRUD domain occupies 151–318; it reads GIPNYFGYQR…EQGSRRLAWI (168 aa).

Belongs to the pseudouridine synthase TruD family.

The catalysed reaction is uridine(13) in tRNA = pseudouridine(13) in tRNA. Functionally, responsible for synthesis of pseudouridine from uracil-13 in transfer RNAs. This Wolinella succinogenes (strain ATCC 29543 / DSM 1740 / CCUG 13145 / JCM 31913 / LMG 7466 / NCTC 11488 / FDC 602W) (Vibrio succinogenes) protein is tRNA pseudouridine synthase D.